The following is a 315-amino-acid chain: MKVVITGGQGFLGQRLAKTLLAQNNVHIDDLILIDVVKPIAPNNDPRVRCYEMNLRYPTGLDELITEETDAIFHLAAIVSSHAEQDPDLGYETNFLATRNILEICRKNNPKVRFIFSSSLAIFGGELPETILDSTAFTPQSTYGTQKAMCELLINDYSRKGFVDGIVVRLPTICIRPGKPNKAASSFVSSIMREPLHGEDAVCPVSEELRLWLSSPNTVVANFIHALQLPSLPLRSWHTINLPGFSVTVKQMLSDLTQVKGEAILEHIKFEFDESINNIVASWPSRIDNTQALALGFKVDSNFQNVIQQFIEYDM.

NAD(+) contacts are provided by Ser119, Tyr143, and Lys147. Tyr143 functions as the Proton acceptor in the catalytic mechanism.

It belongs to the NAD(P)-dependent epimerase/dehydratase family.

It carries out the reaction D-erythronate + NAD(+) = 2-dehydro-D-erythronate + NADH + H(+). Functionally, catalyzes oxidation of D-erythronate to 2-oxo-tetronate. Can use either NAD(+) or NADP(+) as cosubstrate, with a preference for NAD(+). This Haemophilus influenzae (strain ATCC 51907 / DSM 11121 / KW20 / Rd) protein is D-erythronate dehydrogenase.